The chain runs to 116 residues: Large ribosomal subunit protein uL18 (116 aa).

Belongs to the universal ribosomal protein uL18 family. As to quaternary structure, part of the 50S ribosomal subunit; part of the 5S rRNA/L5/L18/L25 subcomplex. Contacts the 5S and 23S rRNAs.

This is one of the proteins that bind and probably mediate the attachment of the 5S RNA into the large ribosomal subunit, where it forms part of the central protuberance. In Azotobacter vinelandii (strain DJ / ATCC BAA-1303), this protein is Large ribosomal subunit protein uL18.